Reading from the N-terminus, the 388-residue chain is Chorismate synthase (388 aa).

NADP(+) is bound by residues arginine 39 and arginine 45. Residues 132–134, 251–252, glycine 296, 311–315, and arginine 337 each bind FMN; these read RSS, NA, and KPIPT.

The protein belongs to the chorismate synthase family. In terms of assembly, homotetramer. Requires FMNH2 as cofactor.

It carries out the reaction 5-O-(1-carboxyvinyl)-3-phosphoshikimate = chorismate + phosphate. It participates in metabolic intermediate biosynthesis; chorismate biosynthesis; chorismate from D-erythrose 4-phosphate and phosphoenolpyruvate: step 7/7. Its function is as follows. Catalyzes the anti-1,4-elimination of the C-3 phosphate and the C-6 proR hydrogen from 5-enolpyruvylshikimate-3-phosphate (EPSP) to yield chorismate, which is the branch point compound that serves as the starting substrate for the three terminal pathways of aromatic amino acid biosynthesis. This reaction introduces a second double bond into the aromatic ring system. The protein is Chorismate synthase of Staphylococcus carnosus (strain TM300).